The following is a 509-amino-acid chain: SH2 domain-containing adapter protein B (509 aa).

2 disordered regions span residues 1–103 (MAKW…GSSL) and 144–178 (SGAG…EVRY). Positions 1-410 (MAKWLNKYFS…PAVPLEKQIW (410 aa)) are mediates interaction with LAT, PTK2/FAK1, JAK1 and JAK3. Residues 44 to 61 (VPQASSAASASCGPATAS) are compositionally biased toward low complexity. Residues 62–79 (CFSASSGSLPDDSGSTSD) are compositionally biased toward polar residues. Phosphoserine is present on Ser-102. The span at 144–158 (SGAGAAASSSSSSGS) shows a compositional bias: low complexity. Lys-187 is covalently cross-linked (Glycyl lysine isopeptide (Lys-Gly) (interchain with G-Cter in SUMO2)). The interval 229-385 (AEESGAGKKD…APGGGFKPIK (157 aa)) is disordered. Basic and acidic residues-rich tracts occupy residues 233-242 (GAGKKDKVTI) and 250-262 (FDAK…KAGK). 2 positions are modified to phosphoserine: Ser-307 and Ser-317. Positions 307–317 (SVDSDSESTVS) are enriched in polar residues. Residues 319 to 334 (RLRESKLPQDDDRPAD) show a composition bias toward basic and acidic residues. Ser-388 bears the Phosphoserine mark. In terms of domain architecture, SH2 spans 410 to 504 (WYHGAISRGD…AEHLSLLYPV (95 aa)).

As to quaternary structure, interacts with PTPN11. Interacts with phosphorylated 'Tyr-720' of the ligand-activated receptor PDGFRA via its SH2 domain. Interacts with the ligand-activated receptors PDGFRB, FGFR1, KDR/VEGFR2, IL2RB and IL2RG. Interacts with EPS8 and V-SRC. Interacts with GRB2 and GRAP. Interacts with CD3Z. Interacts with tyrosine-phosphorylated LAT upon T-cell antigen receptor activation. Interacts with PLCG1. Interacts with ZAP70, LCP2/SLP-76, VAV1 and GRAP2. Interacts with JAK1 and JAK3. Interacts with PTK2/FAK1. Interacts with CRK/CrKII. Interacts with IRS2. Post-translationally, phosphorylated upon PDGFRA, PDGFRB, TCR, IL2 receptor, FGFR1 or VEGFR2 activation. As to expression, widely expressed.

It is found in the cytoplasm. The protein resides in the cell membrane. Its function is as follows. Adapter protein which regulates several signal transduction cascades by linking activated receptors to downstream signaling components. May play a role in angiogenesis by regulating FGFR1, VEGFR2 and PDGFR signaling. May also play a role in T-cell antigen receptor/TCR signaling, interleukin-2 signaling, apoptosis and neuronal cells differentiation by mediating basic-FGF and NGF-induced signaling cascades. May also regulate IRS1 and IRS2 signaling in insulin-producing cells. This Homo sapiens (Human) protein is SH2 domain-containing adapter protein B (SHB).